A 413-amino-acid chain; its full sequence is Ribosomal RNA large subunit methyltransferase G (413 aa).

Residues 389-413 form a disordered region; sequence EAEVEQAFDTETPHPQSALYGKPKA.

Belongs to the methyltransferase superfamily. RlmG family.

The protein resides in the cytoplasm. The catalysed reaction is guanosine(1835) in 23S rRNA + S-adenosyl-L-methionine = N(2)-methylguanosine(1835) in 23S rRNA + S-adenosyl-L-homocysteine + H(+). In terms of biological role, specifically methylates the guanine in position 1835 (m2G1835) of 23S rRNA. This is Ribosomal RNA large subunit methyltransferase G from Shewanella pealeana (strain ATCC 700345 / ANG-SQ1).